The chain runs to 523 residues: Peptidyl-prolyl cis-trans isomerase 4 (523 aa).

A U-box domain is found at 38 to 111 (KRLPINHCSL…GKFRCPVTFR (74 aa)). The 156-residue stretch at 278 to 433 (KNAFVRLVTN…VSVVIMRAEV (156 aa)) folds into the PPIase cyclophilin-type domain.

It belongs to the cyclophilin-type PPIase family. PPIL2 subfamily. In terms of assembly, interacts with mep-1. In terms of tissue distribution, exclusively in the larval body wall striated muscle cells.

It localises to the nucleus. The enzyme catalyses [protein]-peptidylproline (omega=180) = [protein]-peptidylproline (omega=0). It catalyses the reaction S-ubiquitinyl-[E2 ubiquitin-conjugating enzyme]-L-cysteine + [acceptor protein]-L-lysine = [E2 ubiquitin-conjugating enzyme]-L-cysteine + N(6)-ubiquitinyl-[acceptor protein]-L-lysine.. The protein operates within protein modification; protein ubiquitination. May catalyze the cis-trans isomerization of proline imidic peptide bonds in oligopeptides thereby assisting the folding of proteins. May also function as a chaperone, playing a role in intracellular transport of proteins. May also have a protein ubiquitin ligase activity acting as an E3 ubiquitin protein ligase or as a ubiquitin-ubiquitin ligase promoting elongation of ubiquitin chains on proteins. Influences the hermaphrodite switch from spermatogenesis to oogenesis. Required for body wall muscle cell development. This chain is Peptidyl-prolyl cis-trans isomerase 4 (cyn-4), found in Caenorhabditis elegans.